The primary structure comprises 246 residues: Isoprenyl transferase 1 (246 aa).

The active site involves Asp-19. Asp-19 is a Mg(2+) binding site. Substrate is bound by residues Gly-20–Arg-23, Trp-24, Arg-32, His-36, and Ser-64–Asp-66. The active-site Proton acceptor is the Asn-67. Residues Trp-68, Arg-70, Arg-180, and Arg-186–Ser-188 contribute to the substrate site. Glu-199 is a Mg(2+) binding site.

Belongs to the UPP synthase family. Homodimer. Mg(2+) serves as cofactor.

Its function is as follows. Catalyzes the condensation of isopentenyl diphosphate (IPP) with allylic pyrophosphates generating different type of terpenoids. The chain is Isoprenyl transferase 1 from Bradyrhizobium diazoefficiens (strain JCM 10833 / BCRC 13528 / IAM 13628 / NBRC 14792 / USDA 110).